The chain runs to 391 residues: NADH-quinone oxidoreductase subunit D (391 aa).

Belongs to the complex I 49 kDa subunit family. As to quaternary structure, NDH-1 is composed of 14 different subunits. Subunits NuoB, C, D, E, F, and G constitute the peripheral sector of the complex.

The protein resides in the cell inner membrane. It carries out the reaction a quinone + NADH + 5 H(+)(in) = a quinol + NAD(+) + 4 H(+)(out). In terms of biological role, NDH-1 shuttles electrons from NADH, via FMN and iron-sulfur (Fe-S) centers, to quinones in the respiratory chain. The immediate electron acceptor for the enzyme in this species is believed to be ubiquinone. Couples the redox reaction to proton translocation (for every two electrons transferred, four hydrogen ions are translocated across the cytoplasmic membrane), and thus conserves the redox energy in a proton gradient. The polypeptide is NADH-quinone oxidoreductase subunit D (Rickettsia conorii (strain ATCC VR-613 / Malish 7)).